A 689-amino-acid polypeptide reads, in one-letter code: Transketolase (689 aa).

H56 serves as a coordination point for substrate. Thiamine diphosphate contacts are provided by residues H96 and 144–146 (GNL). Position 185 (D185) interacts with Mg(2+). Residues G186 and N215 each contribute to the thiamine diphosphate site. Mg(2+) is bound by residues N215 and I217. Positions 289, 380, and 407 each coordinate substrate. H289 contributes to the thiamine diphosphate binding site. E434 serves as the catalytic Proton donor. F460 contacts thiamine diphosphate. H484, D492, and R543 together coordinate substrate.

This sequence belongs to the transketolase family. As to quaternary structure, homodimer. Mg(2+) serves as cofactor. The cofactor is Ca(2+). Mn(2+) is required as a cofactor. It depends on Co(2+) as a cofactor. Requires thiamine diphosphate as cofactor.

The catalysed reaction is D-sedoheptulose 7-phosphate + D-glyceraldehyde 3-phosphate = aldehydo-D-ribose 5-phosphate + D-xylulose 5-phosphate. In terms of biological role, catalyzes the transfer of a two-carbon ketol group from a ketose donor to an aldose acceptor, via a covalent intermediate with the cofactor thiamine pyrophosphate. The chain is Transketolase (tkt) from Aquifex aeolicus (strain VF5).